A 542-amino-acid chain; its full sequence is Probable folate-biopterin transporter 8, chloroplastic (542 aa).

Residues 1-78 constitute a chloroplast transit peptide; that stretch reads MERIMINPLL…GVSEFEETAR (78 aa). The segment at 24 to 45 is disordered; it reads LSSIHRQQQQQERQSNNNTLFM. Helical transmembrane passes span 103–123, 132–152, 155–175, 181–201, 223–243, 246–266, 308–328, 338–358, 369–389, 404–424, 446–466, and 477–497; these read FPWL…PSTL, LPMV…IGSG, VPYI…MGIF, VLPS…ITEV, ALMA…YLLL, PPKI…VVSL, LIWA…VFCY, SVIG…TVVY, PLIH…YILV, VLCF…PFAV, LCLS…LIGI, and GILI…LVPM. Residues 506-542 are disordered; it reads GKRGISKRSRRNRRVGRVVDKESVTYRRERESEEAQR. Residues 509–521 are compositionally biased toward basic residues; it reads GISKRSRRNRRVG. The segment covering 522 to 542 has biased composition (basic and acidic residues); it reads RVVDKESVTYRRERESEEAQR.

This sequence belongs to the major facilitator superfamily. Folate-biopterin transporter (TC 2.A.71) family.

It is found in the plastid. The protein resides in the chloroplast membrane. Could mediate folate transport. The sequence is that of Probable folate-biopterin transporter 8, chloroplastic from Arabidopsis thaliana (Mouse-ear cress).